The chain runs to 303 residues: Aliphatic sulfonates import ATP-binding protein SsuB (303 aa).

Positions 39-263 constitute an ABC transporter domain; sequence LHVRQVVKRY…ERGAAGFAQL (225 aa). 71-78 provides a ligand contact to ATP; that stretch reads GRSGCGKS.

Belongs to the ABC transporter superfamily. Aliphatic sulfonates importer (TC 3.A.1.17.2) family. In terms of assembly, the complex is composed of two ATP-binding proteins (SsuB), two transmembrane proteins (SsuC) and a solute-binding protein (SsuA).

It is found in the cell inner membrane. The enzyme catalyses ATP + H2O + aliphatic sulfonate-[sulfonate-binding protein]Side 1 = ADP + phosphate + aliphatic sulfonateSide 2 + [sulfonate-binding protein]Side 1.. Part of the ABC transporter complex SsuABC involved in aliphatic sulfonates import. Responsible for energy coupling to the transport system. This is Aliphatic sulfonates import ATP-binding protein SsuB from Cupriavidus necator (strain ATCC 17699 / DSM 428 / KCTC 22496 / NCIMB 10442 / H16 / Stanier 337) (Ralstonia eutropha).